The chain runs to 509 residues: O-acetyltransferase anaAT (509 aa).

It belongs to the fumigaclavine B O-acetyltransferase family. In terms of assembly, monomer.

It carries out the reaction (2R,3S,11R)-aszonalenin + acetyl-CoA = (2R,3S,11R)-acetylaszonalenin + CoA. Its pathway is alkaloid biosynthesis. Functionally, O-acetyltransferase; part of the gene cluster that mediates the biosynthesis of the prenylated pyrroloindoline diketopiperazine acetylaszonalenin. The first step in the pathway is the formation of (R)-benzodiazepinedione by condensation of tryptophan and anthranilic acid catalyzed by the non-ribosomal peptide synthetase anaPS. The prenyltransferase anaPT then converts (R)-benzodiazepinedione to aszonalenin in the presence of dimethylallyl diphosphate (DMAPP) via C3-prenylation. The last step in the biosynthesis of acetylaszonalenin via acetylation of aszonalenin at position N1 catalyzed by anaAT. This Neosartorya fischeri (strain ATCC 1020 / DSM 3700 / CBS 544.65 / FGSC A1164 / JCM 1740 / NRRL 181 / WB 181) (Aspergillus fischerianus) protein is O-acetyltransferase anaAT.